The following is a 1379-amino-acid chain: DNA-directed RNA polymerase subunit beta'' (1379 aa).

Zn(2+)-binding residues include Cys220, Cys293, Cys300, and Cys303.

The protein belongs to the RNA polymerase beta' chain family. RpoC2 subfamily. As to quaternary structure, in plastids the minimal PEP RNA polymerase catalytic core is composed of four subunits: alpha, beta, beta', and beta''. When a (nuclear-encoded) sigma factor is associated with the core the holoenzyme is formed, which can initiate transcription. The cofactor is Zn(2+).

The protein localises to the plastid. It localises to the chloroplast. It catalyses the reaction RNA(n) + a ribonucleoside 5'-triphosphate = RNA(n+1) + diphosphate. DNA-dependent RNA polymerase catalyzes the transcription of DNA into RNA using the four ribonucleoside triphosphates as substrates. This Barbarea verna (Land cress) protein is DNA-directed RNA polymerase subunit beta''.